The chain runs to 41 residues: Large ribosomal subunit protein bL36 (41 aa).

This sequence belongs to the bacterial ribosomal protein bL36 family.

The protein is Large ribosomal subunit protein bL36 of Nitrobacter hamburgensis (strain DSM 10229 / NCIMB 13809 / X14).